We begin with the raw amino-acid sequence, 526 residues long: MVAKDYPFYLTVKRANCSLELPPASGPAKDAEEPSNKRVKPLSRVTSLANLIPPVKATPLKRFSQTLQRSISFRSESRPDILAPRPWSRNAAPSSTKRRDSKLWSETFDVCVNQMLTSKEIKRQEAIFELSQGEEDLIEDLKLAKKAYHDPMLKLSIMTEQELNQIFGTLDSLIPLHEELLSQLRDVRKPDGSTEHVGPILVGWLPCLSSYDSYCSNQVAAKALLDHKKQDHRVQDFLQRCLESPFSRKLDLWNFLDIPRSRLVKYPLLLREILRHTPNDNPDQQHLEEAINIIQGIVAEINTKTGESECRYYKERLLYLEEGQKDSLIDSSRVLCCHGELRNNRGVKLHVFLFQEVLVITRAVTHNEQLCYQLYRQPIPVKDLLLEDLQDGEVRLGGSLRGAFSNNERIKNFFRVSFKNGSQSQTHSLQANDTFNKQQWLNCIRQAKETVLCAAGQAGVLDSEGSFLNPTTGSRELQGETKLEQMDQSDSESDCSMDTSEVSLDCERMEQTDSSCGNSRHGESNV.

Residues 20-40 (ELPPASGPAKDAEEPSNKRVK) form a disordered region. Serine 47 and serine 70 each carry phosphoserine. Residues 122–304 (KRQEAIFELS…QGIVAEINTK (183 aa)) enclose the DH domain. One can recognise a PH domain in the interval 291–449 (INIIQGIVAE…WLNCIRQAKE (159 aa)). The tract at residues 464–526 (EGSFLNPTTG…GNSRHGESNV (63 aa)) is disordered. Residues 466–475 (SFLNPTTGSR) show a composition bias toward polar residues.

As to quaternary structure, interacts with RHOA and RHOB.

It localises to the cytoplasm. Functionally, acts as a guanine nucleotide exchange factor (GEF) for RhoA and RhoB GTPases. The polypeptide is Rho guanine nucleotide exchange factor 3 (ARHGEF3) (Pongo abelii (Sumatran orangutan)).